We begin with the raw amino-acid sequence, 400 residues long: Enoyl-[acyl-carrier-protein] reductase [NADH] 2 (400 aa).

Residues 48 to 53, 75 to 76, 112 to 113, and 141 to 142 contribute to the NAD(+) site; these read GASSGF, FE, DA, and LA. A substrate-binding site is contributed by Y228. The Proton donor role is filled by Y238. Residues K247 and 276-278 contribute to the NAD(+) site; that span reads LVT.

This sequence belongs to the TER reductase family. As to quaternary structure, monomer.

The catalysed reaction is a 2,3-saturated acyl-[ACP] + NAD(+) = a (2E)-enoyl-[ACP] + NADH + H(+). Its pathway is lipid metabolism; fatty acid biosynthesis. In terms of biological role, involved in the final reduction of the elongation cycle of fatty acid synthesis (FAS II). Catalyzes the reduction of a carbon-carbon double bond in an enoyl moiety that is covalently linked to an acyl carrier protein (ACP). This chain is Enoyl-[acyl-carrier-protein] reductase [NADH] 2, found in Vibrio vulnificus (strain CMCP6).